The sequence spans 55 residues: Large ribosomal subunit protein bL33 (55 aa).

Over residues 1–11 the composition is skewed to basic and acidic residues; that stretch reads MAKGGREKIKL. A disordered region spans residues 1 to 29; sequence MAKGGREKIKLESTAGTGHFYTTTKNKKT. Over residues 14 to 24 the composition is skewed to polar residues; the sequence is TAGTGHFYTTT.

The protein belongs to the bacterial ribosomal protein bL33 family.

The protein is Large ribosomal subunit protein bL33 of Thiobacillus denitrificans (strain ATCC 25259 / T1).